The sequence spans 347 residues: Anthranilate phosphoribosyltransferase (347 aa).

Residues glycine 88, 91 to 92 (GD), threonine 96, 98 to 101 (NIST), 116 to 124 (KHGNRSVSS), and serine 128 contribute to the 5-phospho-alpha-D-ribose 1-diphosphate site. Glycine 88 contributes to the anthranilate binding site. Residue serine 100 coordinates Mg(2+). Asparagine 119 lines the anthranilate pocket. Arginine 174 provides a ligand contact to anthranilate. The Mg(2+) site is built by aspartate 232 and glutamate 233.

Belongs to the anthranilate phosphoribosyltransferase family. As to quaternary structure, homodimer. It depends on Mg(2+) as a cofactor.

It carries out the reaction N-(5-phospho-beta-D-ribosyl)anthranilate + diphosphate = 5-phospho-alpha-D-ribose 1-diphosphate + anthranilate. Its pathway is amino-acid biosynthesis; L-tryptophan biosynthesis; L-tryptophan from chorismate: step 2/5. Functionally, catalyzes the transfer of the phosphoribosyl group of 5-phosphorylribose-1-pyrophosphate (PRPP) to anthranilate to yield N-(5'-phosphoribosyl)-anthranilate (PRA). The chain is Anthranilate phosphoribosyltransferase from Shewanella oneidensis (strain ATCC 700550 / JCM 31522 / CIP 106686 / LMG 19005 / NCIMB 14063 / MR-1).